The primary structure comprises 443 residues: Serine/threonine-protein phosphatase 2A 55 kDa regulatory subunit B beta isoform (443 aa).

WD repeat units lie at residues Thr-22 to Val-61, Glu-87 to Glu-128, Ala-171 to Asn-209, and Glu-220 to Arg-260. A Phosphoserine modification is found at Ser-275. 3 WD repeats span residues Glu-279 to Glu-317, Glu-334 to Leu-375, and Asp-410 to Val-442. Tyr-295 carries the post-translational modification Phosphotyrosine. Thr-298 is modified (phosphothreonine).

The protein belongs to the phosphatase 2A regulatory subunit B family. PP2A consists of a common heterodimeric core enzyme, composed of a 36 kDa catalytic subunit (subunit C) and a 65 kDa constant regulatory subunit (PR65 or subunit A), that associates with a variety of regulatory subunits. Proteins that associate with the core dimer include three families of regulatory subunits B (the R2/B/PR55/B55, R3/B''/PR72/PR130/PR59 and R5/B'/B56 families), the 48 kDa variable regulatory subunit, viral proteins, and cell signaling molecules. Interacts with TOMM22. Interacts with IER5 (via N- and C-terminal regions).

The protein resides in the cytoplasm. Its subcellular location is the cytoskeleton. It localises to the membrane. The B regulatory subunit might modulate substrate selectivity and catalytic activity, and might also direct the localization of the catalytic enzyme to a particular subcellular compartment. The protein is Serine/threonine-protein phosphatase 2A 55 kDa regulatory subunit B beta isoform (PPP2R2B) of Bos taurus (Bovine).